Consider the following 432-residue polypeptide: MKKTHITEQNFADLGLQPQVIDGLNAKGFIKCTPIQAKALPVLLAGQDIAGQAQTGTGKTLAFLTATFNHLLTTPAPEGRKITQPRAIIMAPTRELAIQIFNDAESLIASTGLKAALAYGGERYEKQQQVIEQGVDILIGTTGRIIDFYKQGHIDFKMIQAVVLDEADRMFDLGFIKDIRFIFRRMPAPTERLNMLFSATLSYRVQELAFEHMQEPEHVVVEPEQKTGHRIKEELFYPSNDHKMALLQTLIEEEWPDRAIIFANTKHKCESVWGHLAADKHRVGLLTGDVPQKKRERILEEFTQGNVDILVATDVAARGLHIPQVTHVFNFDLPNEAEDYVHRIGRTGRAGASGNSISFACEEYAINLPAIEEYIEHSIPQSDYDASALLEDLPAPLRLQRRPQQNRRNNNGQRQGGNRKHTRPRQPRNTQS.

The Q motif signature appears at 9-37 (QNFADLGLQPQVIDGLNAKGFIKCTPIQA). The Helicase ATP-binding domain occupies 40-219 (LPVLLAGQDI…FEHMQEPEHV (180 aa)). 53-60 (AQTGTGKT) contacts ATP. The DEAD box motif lies at 165–168 (DEAD). One can recognise a Helicase C-terminal domain in the interval 245–390 (ALLQTLIEEE…QSDYDASALL (146 aa)). The disordered stretch occupies residues 396-432 (PLRLQRRPQQNRRNNNGQRQGGNRKHTRPRQPRNTQS). Over residues 417–426 (GNRKHTRPRQ) the composition is skewed to basic residues.

It belongs to the DEAD box helicase family. RhlB subfamily. In terms of assembly, component of the RNA degradosome, which is a multiprotein complex involved in RNA processing and mRNA degradation.

It is found in the cytoplasm. The enzyme catalyses ATP + H2O = ADP + phosphate + H(+). Functionally, DEAD-box RNA helicase involved in RNA degradation. Has RNA-dependent ATPase activity and unwinds double-stranded RNA. The protein is ATP-dependent RNA helicase RhlB of Aliivibrio fischeri (strain ATCC 700601 / ES114) (Vibrio fischeri).